Consider the following 1020-residue polypeptide: Non-canonical nonribosomal peptide synthetase hkm10 (1020 aa).

The tract at residues 21-419 (QMLEDPDAIA…GRFDHQVKIR (399 aa)) is adenylation (A) domain. Residues 526 to 608 (QDKVPSEGAS…QLAHIVDRNQ (83 aa)) enclose the Carrier domain. An O-(pantetheine 4'-phosphoryl)serine modification is found at serine 568. The segment at 652–894 (LTGATGFVGA…FVPIDYVTST (243 aa)) is short-chain dehydrogenase/reductase (R) domain.

The protein belongs to the NRP synthetase family.

It functions in the pathway secondary metabolite biosynthesis. Functionally, non-canonical nonribosomal peptide synthetase; part of the gene cluster that mediates the biosynthesis of hancockiamides, an unusual new family of N-cinnamoylated piperazines. The NRPS hkm10 and the NmrA-like reductase hkm9 are proposed to convert two molecules of L-Phe to the intermediary piperazine called xenocockiamide A. Xenocockiamide A is then converted to hancockiamide D via a series of hydroxylations and O-methylations. The tyrosinase hkm6 may catalyze an aromatic hydroxylation, then the 2-oxoglutarate-dependent Fe(II) dioxygenase hkm4 and the FAD-dependent phenol hydroxylase hkm7 may catalyze consecutive hydroxylations to install 2 more hydroxy groups, and the methyltransferase hkm8 probably catalyzes two methylations using 2 molecules of S-adenosyl-L-methionine (SAM). The NRPS hkm11 activates and transfers trans-cinnamate supplied by the PAL hkm12 to hancockiamide D and produces hancockiamide A. NRPS Hkm11 has the flexibility to tolerate the bulky hancockiamide G as a substrate and the absence of the acetyl-transferase hkm3 opens up the opportunity for hkm11 to introduce a second N-cinnamoyl moiety. The cytochrome P450 monooxygenase hkm5 catalyzes the methylenedioxy bridge formation, converting hancockiamide A into hancockiamide G. Hkm5 can also convert hancockiamide B into hancockiamide C, and hancockiamide D into hancockiamide H. The N-acetyltransferase hkm3 finally transfers an acetyl group to 1-N of piperazine, converting hancockiamide A into hancockiamide B and hancockiamide G into hancockiamide C. This chain is Non-canonical nonribosomal peptide synthetase hkm10, found in Aspergillus hancockii.